Reading from the N-terminus, the 158-residue chain is Small ribosomal subunit protein uS9 (158 aa).

The protein belongs to the universal ribosomal protein uS9 family.

The chain is Small ribosomal subunit protein uS9 from Nitrobacter hamburgensis (strain DSM 10229 / NCIMB 13809 / X14).